The primary structure comprises 462 residues: Iroquois-class homeodomain protein irx-1-B (462 aa).

Positions 121 to 183 (DPGRPKNATR…NARRRLKKEN (63 aa)) form a DNA-binding region, homeobox; TALE-type. 3 disordered regions span residues 191–302 (GKED…PHSK), 314–339 (SPDGALKSSPPPSQANHTSPQMQHPA), and 405–462 (SLSS…LPSA). Acidic residues-rich tracts occupy residues 210–220 (EDDEEIDLESI) and 228–239 (NDGEQSNEEEDE). Basic and acidic residues predominate over residues 240-257 (KLDHFRHGEKVSLKKESE). Positions 410–426 (RTPERTSPKHSDRENLP) are enriched in basic and acidic residues. Residues 446-455 (FSQQEGTSRI) show a composition bias toward polar residues.

It belongs to the TALE/IRO homeobox family.

Its subcellular location is the nucleus. Functionally, acts partially redundantly with other irx members in neural patterning. Required for formation of the posterior forebrain, midbrain, hindbrain, and to a lesser extent, spinal cord. Acts early in neural plate development to induce expression of some but not all proneural genes, and specify a neural precursor state. Also up-regulates repressors that prevent neuronal differentiation. Patterns the neuroectoderm in both the anterior/posterior and dorsal/ventral axes. Acts primarily as a transcriptional repressor during neural development, and binds to the bmp4 promoter to repress gene expression and thus mediate down-regulation of bmp4 by wnt signaling. Controls multiple processes through bmp4-repression including neural plate development, neural crest specification and Spemann organizer development. Involved in the specification of the preplacodal field at the anterior border of the neural plate. Regulates the genetic cascade of interactions that are necessary for positioning the isthmus organizer and the formation of the midbrain-hindbrain boundary. Required during at least two stages of pronephros kidney development; during neurula stages, maintains transcription of key renal genes to define the size and identity of the pronephric anlage, probably in part through regulation of bmp-signaling. Subsequently required for proper formation of the intermediate tubule segment of the pronephros. Acts principally as a transcriptional activator during pronephros development. The protein is Iroquois-class homeodomain protein irx-1-B (irx1-b) of Xenopus laevis (African clawed frog).